The primary structure comprises 468 residues: Secreted triacylglycerol lipase LIP2 (468 aa).

A signal peptide spans 1–22; sequence MFGFRLFILAAVALAYIQCAAA. Cysteines 125 and 295 form a disulfide. Serine 209 (nucleophile) is an active-site residue. 3 N-linked (GlcNAc...) asparagine glycosylation sites follow: asparagine 242, asparagine 252, and asparagine 279. Residues aspartate 355 and histidine 389 contribute to the active site.

This sequence belongs to the AB hydrolase superfamily. Lipase family. Class Lip subfamily.

It localises to the secreted. It carries out the reaction a triacylglycerol + H2O = a diacylglycerol + a fatty acid + H(+). The catalysed reaction is a monoacylglycerol + H2O = glycerol + a fatty acid + H(+). The enzyme catalyses a diacylglycerol + H2O = a monoacylglycerol + a fatty acid + H(+). Functionally, secreted lipase that hydrolyzes acylglycerol lipids such as triacylglycerols and consequently releases free fatty acid. Due to an absence of fatty acid synthase genes in Malassezia species, secretory lipases are essential for the yeast to generate free fatty acids from degradation of sebum and assimilate them as lipid sources for growth. Plays important roles not only in lipid metabolism but also in the immune response of host cells and pathogenesis. The polypeptide is Secreted triacylglycerol lipase LIP2 (Malassezia furfur (Pityriasis versicolor infection agent)).